Consider the following 761-residue polypeptide: uncharacterized protein (761 aa).

Met1 is modified (N-acetylmethionine). Disordered regions lie at residues 1–82 (MEHQ…SSSS), 229–320 (SNII…SALA), and 590–640 (FNRA…PEQQ). The segment covering 13–27 (NSGSNRVTVYNGTTL) has biased composition (polar residues). Low complexity predominate over residues 28–45 (PTMPKSATPTSSSTTVTT). Composition is skewed to polar residues over residues 244–259 (TPVS…SSPE), 266–276 (NTTSSSSTSDH), 590–604 (FNRA…STDD), and 627–640 (SKNS…PEQQ).

Post-translationally, phosphorylated by CDC28.

This is an uncharacterized protein from Saccharomyces cerevisiae (strain ATCC 204508 / S288c) (Baker's yeast).